The sequence spans 330 residues: Ketol-acid reductoisomerase (NADP(+)) (330 aa).

The 181-residue stretch at 1-181 (MKVFYDSDFK…GLSRAGVIQT (181 aa)) folds into the KARI N-terminal Rossmann domain. NADP(+) is bound by residues 24-27 (YGSQ), R47, S52, and 82-85 (DELQ). H107 is a catalytic residue. G133 is a binding site for NADP(+). The 146-residue stretch at 182-327 (TFKEETETDL…AKLRKMCGLE (146 aa)) folds into the KARI C-terminal knotted domain. Positions 190, 194, 226, and 230 each coordinate Mg(2+). S251 contacts substrate.

It belongs to the ketol-acid reductoisomerase family. The cofactor is Mg(2+).

It carries out the reaction (2R)-2,3-dihydroxy-3-methylbutanoate + NADP(+) = (2S)-2-acetolactate + NADPH + H(+). The enzyme catalyses (2R,3R)-2,3-dihydroxy-3-methylpentanoate + NADP(+) = (S)-2-ethyl-2-hydroxy-3-oxobutanoate + NADPH + H(+). Its pathway is amino-acid biosynthesis; L-isoleucine biosynthesis; L-isoleucine from 2-oxobutanoate: step 2/4. It participates in amino-acid biosynthesis; L-valine biosynthesis; L-valine from pyruvate: step 2/4. Its function is as follows. Involved in the biosynthesis of branched-chain amino acids (BCAA). Catalyzes an alkyl-migration followed by a ketol-acid reduction of (S)-2-acetolactate (S2AL) to yield (R)-2,3-dihydroxy-isovalerate. In the isomerase reaction, S2AL is rearranged via a Mg-dependent methyl migration to produce 3-hydroxy-3-methyl-2-ketobutyrate (HMKB). In the reductase reaction, this 2-ketoacid undergoes a metal-dependent reduction by NADPH to yield (R)-2,3-dihydroxy-isovalerate. The chain is Ketol-acid reductoisomerase (NADP(+)) from Methanococcus maripaludis (strain DSM 14266 / JCM 13030 / NBRC 101832 / S2 / LL).